Reading from the N-terminus, the 106-residue chain is uncharacterized protein (106 aa).

2 consecutive transmembrane segments (helical) span residues 10 to 30 (VYIQ…VAFV) and 65 to 85 (LDFA…LLAY).

It localises to the membrane. This is an uncharacterized protein from Saccharomyces cerevisiae (strain ATCC 204508 / S288c) (Baker's yeast).